A 794-amino-acid polypeptide reads, in one-letter code: EVI5-like protein (794 aa).

Residues 1-30 (MASPTLSPDSSSQEALSAPTCSPTSDSENL) show a composition bias toward polar residues. Disordered stretches follow at residues 1 to 36 (MASP…DELE) and 49 to 75 (EADS…SSSA). A compositionally biased stretch (low complexity) spans 55-75 (MRSMNGSRRNSGSSLVSSSSA). The Rab-GAP TBC domain occupies 115–300 (GIPHHFRAIV…RVFDIFMYEG (186 aa)). 2 coiled-coil regions span residues 358-449 (KKMK…QQEN) and 569-709 (EAQA…LKGP). The residue at position 685 (Ser685) is a Phosphoserine. Positions 766-794 (LERPAKDSEGSSDSDADELAAPYSQGLDN) are disordered.

May interact with RAB10.

Its function is as follows. Functions as a GTPase-activating protein (GAP) with a broad specificity. The sequence is that of EVI5-like protein (EVI5L) from Homo sapiens (Human).